The sequence spans 200 residues: Recombination protein RecR (200 aa).

The C4-type zinc finger occupies 58 to 75 (CPDCFCLKTSKTSSCDFC). The Toprim domain occupies 82–177 (SFLCIVATPK…KISRLALGMP (96 aa)).

Belongs to the RecR family.

Functionally, may play a role in DNA repair. It seems to be involved in an RecBC-independent recombinational process of DNA repair. It may act with RecF and RecO. The protein is Recombination protein RecR of Chlamydia muridarum (strain MoPn / Nigg).